Reading from the N-terminus, the 215-residue chain is UPF0323 lipoprotein HP_0232 (215 aa).

An N-terminal signal peptide occupies residues 1 to 27 (MKKPYRKISDYAIVGGLSALVMVSIVG). A lipid anchor (N-palmitoyl cysteine) is attached at Cys28. Cys28 carries the S-diacylglycerol cysteine lipid modification. The segment covering 158–169 (QRTYKSPQAYQR) has biased composition (polar residues). Residues 158 to 215 (QRTYKSPQAYQRSQNSFSKSAPSASSMGGASKGQSGFFGSSRPTSSPAVSSGTRGFNS) are disordered. Low complexity predominate over residues 170–208 (SQNSFSKSAPSASSMGGASKGQSGFFGSSRPTSSPAVSS).

This sequence belongs to the UPF0323 family.

The protein resides in the cell membrane. In Helicobacter pylori (strain ATCC 700392 / 26695) (Campylobacter pylori), this protein is UPF0323 lipoprotein HP_0232.